The sequence spans 294 residues: MSDPNLNDAVEPEAGASESAKDELDIVEAADSVDPDQAEAADLAAGEPAERAAVNVAGDDSDEDDAAAEEAVEADDESADEEEAEPAAPVDPVAALRDELRTLPGEWYVIHTYAGYEKRVKANLEQRAVSLNVEEFIYQAEVPEEEIVQIKNGERKNVRQNKLPGYVLVRMDLTNESWGVVRNTPGVTGFVGNAYDPYPLTLDEIVKMLAPEAEEKAAREAAEAEGKPAPARKVEVQVLDFEVGDSVTVTDGPFATLQATINEINADSKKVKGLVEIFGRETPVELSFDQIQKN.

The tract at residues 1–91 is disordered; the sequence is MSDPNLNDAV…EEAEPAAPVD (91 aa). Residues 25–39 show a composition bias toward acidic residues; the sequence is DIVEAADSVDPDQAE. The segment covering 40–53 has biased composition (low complexity); that stretch reads AADLAAGEPAERAA. The segment covering 59 to 85 has biased composition (acidic residues); the sequence is DDSDEDDAAAEEAVEADDESADEEEAE.

It belongs to the NusG family.

Its function is as follows. Participates in transcription elongation, termination and antitermination. This chain is Transcription termination/antitermination protein NusG, found in Streptomyces griseus.